Reading from the N-terminus, the 63-residue chain is Beta-defensin 4 (63 aa).

The signal sequence occupies residues 1–22 (MRIHYLLFTFLLVLLSPLAAFT). At glutamine 23 the chain carries Pyrrolidone carboxylic acid. 3 disulfides stabilise this stretch: cysteine 31/cysteine 59, cysteine 38/cysteine 52, and cysteine 42/cysteine 60.

The protein belongs to the beta-defensin family. Tongue, esophagus and trachea.

It localises to the secreted. Exhibits antimicrobial activity against Gram-negative bacteria and Gram-positive bacteria. May act as a ligand for C-C chemokine receptor CCR6. Can bind to mouse (but not human) CCR6 and induce chemotactic activity of CCR6-expressing cells. In Mus musculus (Mouse), this protein is Beta-defensin 4 (Defb4).